The following is a 311-amino-acid chain: Telomere-binding protein I1 homolog (311 aa).

This sequence belongs to the chordopoxvirinae I1 family.

It is found in the virion. In terms of biological role, late DNA-binding protein which binds to the hairpin form of the viral telomeric sequence. Required for the production of mature virions (MV). This Fowlpox virus (strain NVSL) (FPV) protein is Telomere-binding protein I1 homolog.